We begin with the raw amino-acid sequence, 411 residues long: Phospholipase A1-II 6 (411 aa).

The Acyl-ester intermediate role is filled by Ser226. Residues Ser226, Asp296, and His334 each act as charge relay system in the active site.

This sequence belongs to the AB hydrolase superfamily. Lipase family.

It localises to the cytoplasm. In terms of biological role, acylhydrolase that catalyzes the hydrolysis of phospholipids at the sn-1 position. This chain is Phospholipase A1-II 6, found in Oryza sativa subsp. japonica (Rice).